The sequence spans 291 residues: Transmembrane protein 41B (291 aa).

Residues 1–11 are compositionally biased toward basic and acidic residues; the sequence is MAKGRVAERSQ. The segment at 1 to 38 is disordered; that stretch reads MAKGRVAERSQTEMLHSTPAGDRAVGTQGSAAPGNKDH. Residue T18 is modified to Phosphothreonine. Helical transmembrane passes span 52 to 72, 109 to 129, 147 to 169, 197 to 217, 225 to 245, and 262 to 282; these read TSLL…FLVY, FYVQ…TFAI, LALF…LSYL, LINY…FINI, PLKV…FVAI, and SWNS…PAIF. A VTT domain; required for its function in autophagy region spans residues 140–251; that stretch reads GFLYPFPLAL…FVAIKAGTTL (112 aa).

It belongs to the TMEM41 family. As to quaternary structure, interacts with VMP1. Interacts with COPA, COPB1, VDAC1 and ERLIN2. Interacts with ATG2A. Interacts with SURF4.

Its subcellular location is the endoplasmic reticulum membrane. The protein localises to the endomembrane system. It catalyses the reaction a 1,2-diacyl-sn-glycero-3-phospho-L-serine(in) = a 1,2-diacyl-sn-glycero-3-phospho-L-serine(out). The enzyme catalyses cholesterol(in) = cholesterol(out). It carries out the reaction a 1,2-diacyl-sn-glycero-3-phosphocholine(in) = a 1,2-diacyl-sn-glycero-3-phosphocholine(out). The catalysed reaction is a 1,2-diacyl-sn-glycero-3-phosphoethanolamine(in) = a 1,2-diacyl-sn-glycero-3-phosphoethanolamine(out). Phospholipid scramblase involved in lipid homeostasis and membrane dynamics processes. Has phospholipid scramblase activity toward cholesterol and phosphatidylserine, as well as phosphatidylethanolamine and phosphatidylcholine. Required for autophagosome formation: participates in early stages of autophagosome biogenesis at the endoplasmic reticulum (ER) membrane by reequilibrating the leaflets of the ER as lipids are extracted by ATG2 (ATG2A or ATG2B) to mediate autophagosome assembly. In addition to autophagy, involved in other processes in which phospholipid scramblase activity is required. Required for normal motor neuron development. This is Transmembrane protein 41B from Rattus norvegicus (Rat).